Here is a 392-residue protein sequence, read N- to C-terminus: Tryptophan synthase beta chain (392 aa).

Lysine 84 is subject to N6-(pyridoxal phosphate)lysine.

It belongs to the TrpB family. In terms of assembly, tetramer of two alpha and two beta chains. Pyridoxal 5'-phosphate is required as a cofactor.

It catalyses the reaction (1S,2R)-1-C-(indol-3-yl)glycerol 3-phosphate + L-serine = D-glyceraldehyde 3-phosphate + L-tryptophan + H2O. The protein operates within amino-acid biosynthesis; L-tryptophan biosynthesis; L-tryptophan from chorismate: step 5/5. Its function is as follows. The beta subunit is responsible for the synthesis of L-tryptophan from indole and L-serine. The protein is Tryptophan synthase beta chain (trpB) of Chlamydia trachomatis serovar D (strain ATCC VR-885 / DSM 19411 / UW-3/Cx).